The following is an 870-amino-acid chain: Probable inorganic carbon transporter subunit DabA (870 aa).

4 residues coordinate Zn(2+): C381, D383, H564, and C579.

It belongs to the inorganic carbon transporter (TC 9.A.2) DabA family. Forms a complex with DabB. It depends on Zn(2+) as a cofactor.

It is found in the cell membrane. Its function is as follows. Part of an energy-coupled inorganic carbon pump. The sequence is that of Probable inorganic carbon transporter subunit DabA from Geobacillus kaustophilus (strain HTA426).